A 304-amino-acid chain; its full sequence is Release factor glutamine methyltransferase (304 aa).

2 residues coordinate S-adenosyl-L-methionine: Asp144 and Asn188. 188 to 191 contacts substrate; sequence NPPY.

The protein belongs to the protein N5-glutamine methyltransferase family. PrmC subfamily.

It catalyses the reaction L-glutaminyl-[peptide chain release factor] + S-adenosyl-L-methionine = N(5)-methyl-L-glutaminyl-[peptide chain release factor] + S-adenosyl-L-homocysteine + H(+). Methylates the class 1 translation termination release factors RF1/PrfA and RF2/PrfB on the glutamine residue of the universally conserved GGQ motif. This chain is Release factor glutamine methyltransferase, found in Mycobacterium tuberculosis (strain ATCC 25618 / H37Rv).